Here is a 446-residue protein sequence, read N- to C-terminus: N-succinylarginine dihydrolase (446 aa).

Residues 19-28 (AGLSFGNVAS), Asn110, and 137-138 (HR) each bind substrate. Glu174 is a catalytic residue. Substrate is bound at residue Arg213. His249 is a catalytic residue. Residues Asp251 and Asn364 each contribute to the substrate site. Cys370 serves as the catalytic Nucleophile.

This sequence belongs to the succinylarginine dihydrolase family. As to quaternary structure, homodimer.

It carries out the reaction N(2)-succinyl-L-arginine + 2 H2O + 2 H(+) = N(2)-succinyl-L-ornithine + 2 NH4(+) + CO2. It participates in amino-acid degradation; L-arginine degradation via AST pathway; L-glutamate and succinate from L-arginine: step 2/5. Functionally, catalyzes the hydrolysis of N(2)-succinylarginine into N(2)-succinylornithine, ammonia and CO(2). This chain is N-succinylarginine dihydrolase, found in Burkholderia cenocepacia (strain HI2424).